The sequence spans 97 residues: Aspartyl/glutamyl-tRNA(Asn/Gln) amidotransferase subunit C (97 aa).

This sequence belongs to the GatC family. In terms of assembly, heterotrimer of A, B and C subunits.

The catalysed reaction is L-glutamyl-tRNA(Gln) + L-glutamine + ATP + H2O = L-glutaminyl-tRNA(Gln) + L-glutamate + ADP + phosphate + H(+). It catalyses the reaction L-aspartyl-tRNA(Asn) + L-glutamine + ATP + H2O = L-asparaginyl-tRNA(Asn) + L-glutamate + ADP + phosphate + 2 H(+). Allows the formation of correctly charged Asn-tRNA(Asn) or Gln-tRNA(Gln) through the transamidation of misacylated Asp-tRNA(Asn) or Glu-tRNA(Gln) in organisms which lack either or both of asparaginyl-tRNA or glutaminyl-tRNA synthetases. The reaction takes place in the presence of glutamine and ATP through an activated phospho-Asp-tRNA(Asn) or phospho-Glu-tRNA(Gln). The sequence is that of Aspartyl/glutamyl-tRNA(Asn/Gln) amidotransferase subunit C from Prochlorococcus marinus (strain MIT 9211).